We begin with the raw amino-acid sequence, 131 residues long: Small ribosomal subunit protein uS9c (131 aa).

This sequence belongs to the universal ribosomal protein uS9 family.

It localises to the plastid. Its subcellular location is the chloroplast. This is Small ribosomal subunit protein uS9c (rps9) from Emiliania huxleyi (Coccolithophore).